We begin with the raw amino-acid sequence, 335 residues long: MKKNVSLTRYLVEQQRVDGLIPGQLRLLLEVVARACKRISQSVNKGAIGDVLGTAGSENVQGEVQKKLDIIANEVLIEANEWGGHLAAMASEEMEGIYLVPNRYPHGEYLLMFDPLDGSSNIDVNVSIGTIFSVLKKPEGHPGVTEQDFMQPGTQQVAAGYCIYGPQTTLVLTVGDGVSMFTLDREQGSFVLVQENIRIPEDTKEFAINMSNMRHWDTPVKRYVDECLAGVEGPRGKDFNMRWIASMVADVHRIMTRGGIFMYPWDRREPNKPGKLRLMYEANPMAWLVEQAGGAATNGKQRILDIQPTQLHERVSVILGSKNEVEKVTQYHSEA.

Mg(2+) is bound by residues glutamate 92, aspartate 114, leucine 116, and aspartate 117. Substrate contacts are provided by residues 117 to 120 (DGSS), asparagine 209, and lysine 275. Position 281 (glutamate 281) interacts with Mg(2+).

Belongs to the FBPase class 1 family. In terms of assembly, homotetramer. The cofactor is Mg(2+).

Its subcellular location is the cytoplasm. The enzyme catalyses beta-D-fructose 1,6-bisphosphate + H2O = beta-D-fructose 6-phosphate + phosphate. Its pathway is carbohydrate biosynthesis; gluconeogenesis. This Delftia acidovorans (strain DSM 14801 / SPH-1) protein is Fructose-1,6-bisphosphatase class 1.